A 394-amino-acid chain; its full sequence is Putative F-box protein At5g66830 (394 aa).

Positions 17–63 (DWCWSKLPSDLMQFVFDRLGFADFQRAKSVCSSWLSVSRNSQPNNQI) constitute an F-box domain.

The sequence is that of Putative F-box protein At5g66830 from Arabidopsis thaliana (Mouse-ear cress).